The following is a 212-amino-acid chain: Pyridoxine/pyridoxamine 5'-phosphate oxidase (212 aa).

Substrate-binding positions include arginine 8–tyrosine 11 and lysine 66. Residues arginine 61–lysine 66, phenylalanine 76–threonine 77, arginine 82, lysine 83, and glutamine 105 each bind FMN. Residues tyrosine 123, arginine 127, and serine 131 each coordinate substrate. FMN-binding positions include glutamine 140–serine 141 and tryptophan 185. Arginine 191–histidine 193 is a binding site for substrate. Arginine 195 contacts FMN.

This sequence belongs to the pyridoxamine 5'-phosphate oxidase family. Homodimer. FMN serves as cofactor.

The catalysed reaction is pyridoxamine 5'-phosphate + O2 + H2O = pyridoxal 5'-phosphate + H2O2 + NH4(+). It catalyses the reaction pyridoxine 5'-phosphate + O2 = pyridoxal 5'-phosphate + H2O2. The protein operates within cofactor metabolism; pyridoxal 5'-phosphate salvage; pyridoxal 5'-phosphate from pyridoxamine 5'-phosphate: step 1/1. It functions in the pathway cofactor metabolism; pyridoxal 5'-phosphate salvage; pyridoxal 5'-phosphate from pyridoxine 5'-phosphate: step 1/1. Functionally, catalyzes the oxidation of either pyridoxine 5'-phosphate (PNP) or pyridoxamine 5'-phosphate (PMP) into pyridoxal 5'-phosphate (PLP). The polypeptide is Pyridoxine/pyridoxamine 5'-phosphate oxidase (Shewanella halifaxensis (strain HAW-EB4)).